Here is a 1417-residue protein sequence, read N- to C-terminus: DNA-directed RNA polymerase subunit beta' (1417 aa).

C68, C70, C83, and C86 together coordinate Zn(2+). D458, D460, and D462 together coordinate Mg(2+). C811, C884, C891, and C894 together coordinate Zn(2+).

It belongs to the RNA polymerase beta' chain family. The RNAP catalytic core consists of 2 alpha, 1 beta, 1 beta' and 1 omega subunit. When a sigma factor is associated with the core the holoenzyme is formed, which can initiate transcription. Mg(2+) is required as a cofactor. Requires Zn(2+) as cofactor.

It carries out the reaction RNA(n) + a ribonucleoside 5'-triphosphate = RNA(n+1) + diphosphate. Functionally, DNA-dependent RNA polymerase catalyzes the transcription of DNA into RNA using the four ribonucleoside triphosphates as substrates. The protein is DNA-directed RNA polymerase subunit beta' of Francisella tularensis subsp. holarctica (strain OSU18).